The following is a 298-amino-acid chain: MPANGNPIIAFMSDLGTTDDSVAQCKGLMLSICPGVTIVDVNHSMTPWDVEEGARYIVDLPRFFPEGTVFATTTYPATGTATRSVALRIKQAAQGGARGQWAGSGAGFERAEGSYIYIAPNNGLLTTVIEEHGYIEAYEVSNTKVIPAEPEPTFYSREMVAIPSAHLAAGFPLNEVGRALSDDEIVRFAKPKPSTVSGGVLSGVITNIDHPFGNLWTNIHRTDLEKAGIGYQTQLRLLLDGVLTFDLPLVPTFADAGQIGDPVIYINSRGYLALARNAAPLAYPYNLKAGLTVTVTKA.

S-adenosyl-L-methionine is bound by residues D14, 19–21 (DDS), Y75, S156, D209, N214, 268–269 (SR), and 276–278 (RNA).

Belongs to the SAM hydrolase / SAM-dependent halogenase family.

The enzyme catalyses fluoride + S-adenosyl-L-methionine = 5'-deoxy-5'-fluoroadenosine + L-methionine. Functionally, catalyzes the formation of a C-F bond by combining S-adenosyl-L-methionine (SAM) and fluoride to generate 5'-fluoro-5'-deoxyadenosine (5'-FDA) and L-methionine. The polypeptide is Fluorinase (Actinoplanes sp. (strain N902-109)).